The chain runs to 139 residues: Large ribosomal subunit protein uL16 (139 aa).

This sequence belongs to the universal ribosomal protein uL16 family. As to quaternary structure, part of the 50S ribosomal subunit.

In terms of biological role, binds 23S rRNA and is also seen to make contacts with the A and possibly P site tRNAs. This is Large ribosomal subunit protein uL16 from Chlorobium phaeobacteroides (strain BS1).